Reading from the N-terminus, the 99-residue chain is Plastocyanin (99 aa).

In terms of domain architecture, Plastocyanin-like spans 1-99; the sequence is IEVLLGGDDG…AGMVGKVTVN (99 aa). The Cu cation site is built by histidine 37, cysteine 84, histidine 87, and methionine 92.

The protein belongs to the plastocyanin family. It depends on Cu(2+) as a cofactor.

It is found in the plastid. It localises to the chloroplast thylakoid membrane. Participates in electron transfer between P700 and the cytochrome b6-f complex in photosystem I. The polypeptide is Plastocyanin (PETE) (Cucurbita pepo (Vegetable marrow)).